A 404-amino-acid chain; its full sequence is MKYNINVHSEIGQLQTVLVHTPGNEIRRISPRRLDDLLFSAVIEPDTAIQEHQTFCQLLQEQNIEVVQLTDLTATTFDKANATAQNQFIETWLDQAEPKLTPEHRKVAKQYLLEQKAKSTLSMVRSMMGGIDKRKVAAANTINGDFLVDPMPNLYFTRDPFASIGHGISINRMKYLTRRRETLFASFIFANHPIIAARKFYFKPIDMGTIEGGDIFVYDQQTVVMGLSERTTEAAINVLAKKIQQDSSTSFKRIFVINVPQLPNLMHLDTWLTMLDRNKFLYSPNMLAVLKAWRIDFTDPALKWNEIAGDLSTILHTIIGQKPMLIPIAGADANQTEIDIETHFDGTNYLTIAPSVVVGYARNKLTHQTLEAAGVKVIAFKGNQLSLGMGSARCMSMPLVRKPL.

The active-site Amidino-cysteine intermediate is the C394.

This sequence belongs to the arginine deiminase family.

Its subcellular location is the cytoplasm. The enzyme catalyses L-arginine + H2O = L-citrulline + NH4(+). It functions in the pathway amino-acid degradation; L-arginine degradation via ADI pathway; carbamoyl phosphate from L-arginine: step 1/2. The chain is Putative arginine deiminase (arcA) from Mycoplasma pneumoniae (strain ATCC 29342 / M129 / Subtype 1) (Mycoplasmoides pneumoniae).